The sequence spans 550 residues: Chaperonin GroEL (550 aa).

Residues 30 to 33 (TLGP), K51, 87 to 91 (DGTTT), G415, 479 to 481 (NAA), and D495 contribute to the ATP site.

It belongs to the chaperonin (HSP60) family. As to quaternary structure, forms a cylinder of 14 subunits composed of two heptameric rings stacked back-to-back. Interacts with the co-chaperonin GroES.

Its subcellular location is the cytoplasm. It carries out the reaction ATP + H2O + a folded polypeptide = ADP + phosphate + an unfolded polypeptide.. Together with its co-chaperonin GroES, plays an essential role in assisting protein folding. The GroEL-GroES system forms a nano-cage that allows encapsulation of the non-native substrate proteins and provides a physical environment optimized to promote and accelerate protein folding. This chain is Chaperonin GroEL, found in Marinobacter nauticus (strain ATCC 700491 / DSM 11845 / VT8) (Marinobacter aquaeolei).